The sequence spans 506 residues: Zinc finger protein MAGPIE (506 aa).

The segment at 1–53 is disordered; that stretch reads MTTEDQTISSSGGYVQSSSTTDHVDHHHHDQHESLNPPLVKKKRNLPGNPDPE. The span at 9-21 shows a compositional bias: low complexity; that stretch reads SSSGGYVQSSSTT. A compositionally biased stretch (basic and acidic residues) spans 22–33; sequence DHVDHHHHDQHE. Serine 60 carries the phosphoserine modification. 2 C2H2-type zinc fingers span residues 70–92 and 111–141; these read FLCEICGKGFQRDQNLQLHRRGH and YVCPEKSCVHHHPTRALGDLTGIKKHFCRKH. The short motif at 133–140 is the Nuclear localization signal element; the sequence is IKKHFCRK. The segment at 146–169 adopts a C2H2-type 2; degenerate zinc-finger fold; sequence WKCEKCAKRYAVQSDWKAHSKTCG. The Zn(2+) site is built by cysteine 148, cysteine 151, histidine 164, cysteine 168, cysteine 175, cysteine 177, histidine 190, and cysteine 194. Residues 173–196 form a CCHC-type 2; atypical zinc finger; it reads YRCDCGTIFSRRDSFITHRAFCDA. Residues 183–195 form an SHR-binding region; it reads RRDSFITHRAFCD.

Interacts with SHR, SCR and JKD, but not with itself. Interacts with SIEL. Binds to RGA and SCL3 competitively in the nucleus. As to expression, expressed in the ground tissue and stele cells of embryos and 2-days post-germination roots but not in the quiescent center. Detected only in cells that perform asymmetric cell divisions. In roots, present in cortex, endodermis, and pericycle layer.

The protein localises to the nucleus. In terms of biological role, transcription factor that regulates tissue boundaries and asymmetric cell division. Contributes to the sequestration of 'SHORT-ROOT' to the nucleus. Interacts with the SCR and MGP promoters. Does not show transcription activity by itself, but regulates the transcription of downstream genes through interaction with other transcription factors. Binds DNA via its zinc fingers. Recognizes and binds to SCL3 promoter sequence 5'-AGACAA-3' to promote its expression when in complex with RGA. Positively involved in gibberellic acid (GA) signaling. The polypeptide is Zinc finger protein MAGPIE (Arabidopsis thaliana (Mouse-ear cress)).